A 357-amino-acid chain; its full sequence is Probable dual-specificity RNA methyltransferase RlmN (357 aa).

The active-site Proton acceptor is Glu-95. Positions 106–340 (NRDRHTVCVS…VSVREEKGTD (235 aa)) constitute a Radical SAM core domain. The cysteines at positions 113 and 345 are disulfide-linked. Cys-120, Cys-124, and Cys-127 together coordinate [4Fe-4S] cluster. S-adenosyl-L-methionine is bound by residues 172–173 (GE), Ser-204, 227–229 (SLH), and Asn-302. The active-site S-methylcysteine intermediate is the Cys-345.

The protein belongs to the radical SAM superfamily. RlmN family. The cofactor is [4Fe-4S] cluster.

Its subcellular location is the cytoplasm. The catalysed reaction is adenosine(2503) in 23S rRNA + 2 reduced [2Fe-2S]-[ferredoxin] + 2 S-adenosyl-L-methionine = 2-methyladenosine(2503) in 23S rRNA + 5'-deoxyadenosine + L-methionine + 2 oxidized [2Fe-2S]-[ferredoxin] + S-adenosyl-L-homocysteine. It carries out the reaction adenosine(37) in tRNA + 2 reduced [2Fe-2S]-[ferredoxin] + 2 S-adenosyl-L-methionine = 2-methyladenosine(37) in tRNA + 5'-deoxyadenosine + L-methionine + 2 oxidized [2Fe-2S]-[ferredoxin] + S-adenosyl-L-homocysteine. In terms of biological role, specifically methylates position 2 of adenine 2503 in 23S rRNA and position 2 of adenine 37 in tRNAs. The chain is Probable dual-specificity RNA methyltransferase RlmN from Desulfitobacterium hafniense (strain Y51).